The sequence spans 470 residues: Na(+)-translocating NADH-quinone reductase subunit A (470 aa).

Belongs to the NqrA family. As to quaternary structure, composed of six subunits; NqrA, NqrB, NqrC, NqrD, NqrE and NqrF.

The catalysed reaction is a ubiquinone + n Na(+)(in) + NADH + H(+) = a ubiquinol + n Na(+)(out) + NAD(+). NQR complex catalyzes the reduction of ubiquinone-1 to ubiquinol by two successive reactions, coupled with the transport of Na(+) ions from the cytoplasm to the periplasm. NqrA to NqrE are probably involved in the second step, the conversion of ubisemiquinone to ubiquinol. The protein is Na(+)-translocating NADH-quinone reductase subunit A of Chlamydia caviae (strain ATCC VR-813 / DSM 19441 / 03DC25 / GPIC) (Chlamydophila caviae).